The chain runs to 189 residues: Peptidyl-tRNA hydrolase (189 aa).

Position 14 (Y14) interacts with tRNA. H19 serves as the catalytic Proton acceptor. TRNA-binding residues include Y64, N66, and N112.

Belongs to the PTH family. In terms of assembly, monomer.

It localises to the cytoplasm. It carries out the reaction an N-acyl-L-alpha-aminoacyl-tRNA + H2O = an N-acyl-L-amino acid + a tRNA + H(+). Its function is as follows. Hydrolyzes ribosome-free peptidyl-tRNAs (with 1 or more amino acids incorporated), which drop off the ribosome during protein synthesis, or as a result of ribosome stalling. Functionally, catalyzes the release of premature peptidyl moieties from peptidyl-tRNA molecules trapped in stalled 50S ribosomal subunits, and thus maintains levels of free tRNAs and 50S ribosomes. The polypeptide is Peptidyl-tRNA hydrolase (Finegoldia magna (strain ATCC 29328 / DSM 20472 / WAL 2508) (Peptostreptococcus magnus)).